The chain runs to 499 residues: Cobyric acid synthase (499 aa).

Residues 246–441 form the GATase cobBQ-type domain; that stretch reads PIDIAIIKLP…IHGIFDGAEL (196 aa). Catalysis depends on cysteine 327, which acts as the Nucleophile. Residue histidine 433 is part of the active site.

It belongs to the CobB/CobQ family. CobQ subfamily.

It participates in cofactor biosynthesis; adenosylcobalamin biosynthesis. Functionally, catalyzes amidations at positions B, D, E, and G on adenosylcobyrinic A,C-diamide. NH(2) groups are provided by glutamine, and one molecule of ATP is hydrogenolyzed for each amidation. The sequence is that of Cobyric acid synthase from Clostridium kluyveri (strain NBRC 12016).